The sequence spans 477 residues: MFETVIGLEVHVQLNTKTKLFCSCPTSFAEHQNKNTCPTCLALPGALPVVNKEAAIKAMRFGYAVNANVNHTSIFDRKSYFYPDSPSAYQITQLSKAIVQKGELFIDLEDGSQKRIGITQAHLEADAGKNMHEGNYSKVDLNRAGTPLMEIVSEPDMRSSDEAVAYLKKLHSTVRYLDISDANMQEGSFRCDVNVSIRPKGQEAFGTRVEIKNINSFRFVAQAIAYEVQRQVEAYEDGVYAQEVHQETRLWDVAKSETRSMRGKEEAADYRYFPDPDLRPLTVTQEMIDEALVMPELPDAKVKRYVEELGIKHYDALVITSQKELAYYFEEMITQGAVAKTAVTWLTSELLGRLNKAGIEIENSPVSAKTLGELVAKIADDTVSGKGAKEVLDHMMENENRDIDVIIDELGLAQVSDDGAILAIIDEILENNQEKVEQYKGGKEKLFGFFVGQTMKVSKGTANPGKVNELLKQRLNS.

Belongs to the GatB/GatE family. GatB subfamily. As to quaternary structure, heterotrimer of A, B and C subunits.

It catalyses the reaction L-glutamyl-tRNA(Gln) + L-glutamine + ATP + H2O = L-glutaminyl-tRNA(Gln) + L-glutamate + ADP + phosphate + H(+). It carries out the reaction L-aspartyl-tRNA(Asn) + L-glutamine + ATP + H2O = L-asparaginyl-tRNA(Asn) + L-glutamate + ADP + phosphate + 2 H(+). In terms of biological role, allows the formation of correctly charged Asn-tRNA(Asn) or Gln-tRNA(Gln) through the transamidation of misacylated Asp-tRNA(Asn) or Glu-tRNA(Gln) in organisms which lack either or both of asparaginyl-tRNA or glutaminyl-tRNA synthetases. The reaction takes place in the presence of glutamine and ATP through an activated phospho-Asp-tRNA(Asn) or phospho-Glu-tRNA(Gln). In Sulfurovum sp. (strain NBC37-1), this protein is Aspartyl/glutamyl-tRNA(Asn/Gln) amidotransferase subunit B.